Reading from the N-terminus, the 407-residue chain is Probable sodium/metabolite cotransporter BASS5, chloroplastic (407 aa).

A chloroplast-targeting transit peptide spans 1–57; that stretch reads MGVISPTETLFLKSQHRLLQPRNYSYALAFHSTRRVANFPRNSFSSLGSCSVDFPLR. The next 9 membrane-spanning stretches (helical) occupy residues 101–121, 122–142, 162–184, 191–213, 222–242, 252–272, 286–306, 317–337, and 379–399; these read FIPHGILLSTILALVYPPSFT, WFKPRYFVPGLGFMMFAVGIN, YIGQYLIKPLLGYIFGVIAVSLF, GAGIMLVSCVSGAQLSNYTTFLT, IVMTSISTATAVLVTPMLSLL, VFGMISSILQVVITPIAAGLL, PFLPALTVIDMSCCIGAPLAL, ATILFLVITFHLLAFVAGYFF, and LVGVPPAISTVVMSLMGVSLV.

This sequence belongs to the bile acid:sodium symporter (BASS) (TC 2.A.28) family. Widely expressed.

Its subcellular location is the membrane. The protein resides in the plastid. It localises to the chloroplast envelope. Its function is as follows. Plastidic transporter involved in the biosynthesis of aliphatic glucosinolates by translocating the biosynthetic intermediates of Met-derived glucosinolates across chloroplast membranes. Transports short chain (C2) alpha-keto acids, such as 4-methylsulfanyl-2-oxobutanoic acid, from the cytosol to the chloroplast where they are subjected to chain elongation cycles. Also functions in the transport of chain-elongated (C3 to C8) Met derivatives from the chloroplast to the cytosol. Does not seem to be involved in the transport of indole-derived glucosinolates. The sequence is that of Probable sodium/metabolite cotransporter BASS5, chloroplastic (BASS5) from Arabidopsis thaliana (Mouse-ear cress).